A 193-amino-acid chain; its full sequence is Achaete-scute homolog 2 (193 aa).

Disordered stretches follow at residues Met1–Ala27, Arg37–Asn56, and Gly118–Ser177. Residues Ala50 to Leu102 form the bHLH domain. Residues Ala140–Pro150 show a composition bias toward low complexity.

In terms of assembly, efficient DNA binding requires dimerization with another basic helix-loop-helix (bHLH) protein. Forms heterodimers with bHLH transcription factor TCF3. May not heterodimerise with bHLH protein HAND1. In terms of tissue distribution, expressed in the placenta at a stage between the first and second trimesters and when it matures, at about 32-36 weeks. Expressed in the extravillous trophoblasts, the intermediate trophoblasts, and at lower levels in the cytotrophoblasts and stroma of chorionic villi of the developing placenta. Expressed in follicular T-helper (Tfh) cells.

It is found in the nucleus. Transcription factor. Binds to E-box motifs 5'-CANNTG-3' in the regulatory elements of target genes, probably as a heterodimer with another basic helix-loop-helix (bHLH) protein such as the transcription factor TCF3. May bind both open and closed chromatin, acting as a pioneer transcription factor to allow other factors to bind and activate lineage-specific genes. Required during post-implantation development for the generation of some differentiated trophoblast cell types. Transcriptional activity of ASCL2 may be antagonised in a subset of trophoblast cells by bHLH transcription factor HAND1, perhaps by competing for dimerization with other bHLH proteins. Involved in differentiation and function of follicular T-helper (Tfh) cells, thereby playing a role in germinal center responses; probably modulates expression of genes involved in Tfh cell function, such as BCL6. May also act as a suppressor of Th1-, Th2- and Th17-cell differentiation. Induces the formation of stem cells in intestinal crypts in vitro, synergistically activating transcription of target genes, such as SOX9, together with TCF4/beta-catenin. May form a bistable transcriptional switch, controlling expression of its own gene together with Wnt/R-spondin signaling, and thereby maintaining stem cell characteristics. Modulates expression of target genes, including perhaps down-regulating EGR1/Krox24 and chemokine CXCL10/Mob-1 and up-regulating CXCR4 and CDKN1C/p57kip2, in Schwann cells. May play a role in reducing proliferation of Schwann cells, perhaps acting via modulation of expression of CDKN1C. May be dispensable for blastocyst formation and later embryonic function. May be involved in the determination of neuronal precursors. This is Achaete-scute homolog 2 (ASCL2) from Homo sapiens (Human).